Consider the following 628-residue polypeptide: Basal cell adhesion molecule (628 aa).

A signal peptide spans Met1–Ala31. Ig-like V-type domains lie at Glu32–Lys142 and Pro150–Gly253. Residues Glu32–Ala547 lie on the Extracellular side of the membrane. 3 disulfides stabilise this stretch: Cys53–Cys125, Cys172–Cys237, and Cys291–Cys337. Ig-like C2-type domains are found at residues Pro254–Glu355, Glu355–Arg441, and Pro448–Gly538. N-linked (GlcNAc...) asparagine glycans are attached at residues Asn321, Asn330, and Asn378. Intrachain disulfides connect Cys384–Cys424 and Cys473–Cys522. Residues Gly548–Phe568 traverse the membrane as a helical segment. Residues Tyr569–Cys628 are Cytoplasmic-facing. Residues Cys580–Cys628 form a disordered region. Residues Ser596, Ser598, Ser600, and Ser621 each carry the phosphoserine modification. Residues Ala613–Cys628 are compositionally biased toward gly residues.

In terms of assembly, homodimer. Interacts with ITGA4:ITGB1. Interacts with spectrins SPTA1 and SPTB1. Epinephrine-stimulated phosphorylation of Ser-621 by PKA enhances adhesion to laminin. Ser-621 can also be phosphorylated by AKT1.

Its subcellular location is the cell membrane. Transmembrane glycoprotein that functions as both a receptor and an adhesion molecule playing a crucial role in cell adhesion, motility, migration and invasion. Extracellular domain enables binding to extracellular matrix proteins, such as laminin, integrin and other ligands while its intracellular domain interacts with cytoskeletal proteins like hemoglobin, facilitating cell signal transduction. Serves as a receptor for laminin alpha-5/LAMA5 to promote cell adhesion. Mechanistically, JAK2 induces BCAM phosphorylation and activates its adhesion to laminin by stimulating a Rap1/AKT signaling pathway in the absence of EPOR. This Bos taurus (Bovine) protein is Basal cell adhesion molecule (BCAM).